Reading from the N-terminus, the 533-residue chain is Phosphatidylinositol 4-kinase gamma 8 (533 aa).

Positions 101 to 397 constitute a PI3K/PI4K catalytic domain; it reads GAQPLLLPSG…AVSGSDDDDD (297 aa). Residues 107–113 are G-loop; the sequence is LPSGLGG. ATP-binding positions include 108-114, Lys-129, and 210-213; these read PSGLGGA and QRFV. The segment at 243-251 is catalytic loop; sequence LNLDRHAGN. An activation loop region spans residues 276–302; it reads PIDHGLCLPECLDDPYFEWLNWPQASV. Asp-278 is a binding site for ATP.

It belongs to the PI3/PI4-kinase family. Type II PI4K subfamily.

The catalysed reaction is a 1,2-diacyl-sn-glycero-3-phospho-(1D-myo-inositol) + ATP = a 1,2-diacyl-sn-glycero-3-phospho-(1D-myo-inositol 4-phosphate) + ADP + H(+). Its function is as follows. The phosphorylation of phosphatidylinositol (PI) to PI4P is the first committed step in the generation of phosphatidylinositol 4,5-bisphosphate (PIP2), a precursor of the second messenger inositol 1,4,5-trisphosphate (InsP3). The polypeptide is Phosphatidylinositol 4-kinase gamma 8 (PI4KG8) (Arabidopsis thaliana (Mouse-ear cress)).